A 1252-amino-acid polypeptide reads, in one-letter code: Guanine nucleotide exchange factor SDC25 (1252 aa).

Positions 26-97 constitute an SH3 domain; sequence QPIDVVECTY…PPSFTRSILN (72 aa). Disordered stretches follow at residues 409–454 and 623–648; these read IPAS…DTIW and LNLDNAKDKKNGSQNTDIQEEEDEYE. The span at 416–428 shows a compositional bias: low complexity; it reads TSCSSETSHHSPS. Residues 782–914 enclose the N-terminal Ras-GEF domain; that stretch reads SNNRIKGGSK…LLKEVNQKFK (133 aa). The region spanning 952-1199 is the Ras-GEF domain; the sequence is DPVLFATQLT…YQLSLIIEPK (248 aa). The interval 1201 to 1252 is disordered; it reads RKKVVPNSNSNNKSQEKSRDDQTDEGKTSTKKDRFSKFQLHKTKKKAPKVSK. The segment covering 1214 to 1236 has biased composition (basic and acidic residues); it reads SQEKSRDDQTDEGKTSTKKDRFS. The span at 1239 to 1252 shows a compositional bias: basic residues; it reads QLHKTKKKAPKVSK.

In terms of biological role, promotes the exchange of Ras-bound GDP by GTP. This Saccharomyces cerevisiae (strain YJM789) (Baker's yeast) protein is Guanine nucleotide exchange factor SDC25 (SDC25).